A 423-amino-acid polypeptide reads, in one-letter code: Protein disulfide isomerase-like 5-2 (423 aa).

Residues 1-35 (MAATTTRPLPLLLLLLLPPLLLLLLSFHAAAAAAA) form the signal peptide. In terms of domain architecture, Thioredoxin spans 36-149 (EEFPRDGRVI…LVRNLNKFVA (114 aa)). Residues Cys-71 and Cys-74 each act as nucleophile in the active site. An intrachain disulfide couples Cys-71 to Cys-74. Asn-181 carries N-linked (GlcNAc...) asparagine glycosylation. A helical transmembrane segment spans residues 386 to 406 (LVSLNSLYILICVFALLGVMI).

It belongs to the protein disulfide isomerase family.

It localises to the membrane. Functionally, acts as a protein-folding catalyst that interacts with nascent polypeptides to catalyze the formation, isomerization, and reduction or oxidation of disulfide bonds. May play a role in storage protein biogenesis. The sequence is that of Protein disulfide isomerase-like 5-2 (PDIL5-2) from Oryza sativa subsp. japonica (Rice).